We begin with the raw amino-acid sequence, 99 residues long: MLKPNMLIIIFIIVCLFSIIIFTVLKSKRGDDDESDDGFSCYNKPIGVNFPHPTRCDAFYMCVGLNQKLELICPEGFEFDPDVKNCVPISDYGCTANQN.

In terms of domain architecture, Chitin-binding type-2 spans 38–96 (GFSCYNKPIGVNFPHPTRCDAFYMCVGLNQKLELICPEGFEFDPDVKNCVPISDYGCTA). C73 and C86 form a disulfide bridge.

The protein localises to the host nucleus. It localises to the virion. Its function is as follows. Plays a role in primary oral infection of the host. This Autographa californica nuclear polyhedrosis virus (AcMNPV) protein is Protein AC150.